The primary structure comprises 177 residues: Large ribosomal subunit protein uL6 (177 aa).

Belongs to the universal ribosomal protein uL6 family. As to quaternary structure, part of the 50S ribosomal subunit.

Functionally, this protein binds to the 23S rRNA, and is important in its secondary structure. It is located near the subunit interface in the base of the L7/L12 stalk, and near the tRNA binding site of the peptidyltransferase center. This Pseudomonas entomophila (strain L48) protein is Large ribosomal subunit protein uL6.